Reading from the N-terminus, the 370-residue chain is Cytochrome b (370 aa).

The next 4 helical transmembrane spans lie at 25 to 45 (FGSM…FLAV), 69 to 90 (WMMQ…YIHI), 105 to 125 (WLSG…GYVL), and 170 to 190 (FFAL…LHIL). The heme b site is built by His-75 and His-89. Heme b contacts are provided by His-174 and His-188. Residue His-193 participates in a ubiquinone binding. The next 4 membrane-spanning stretches (helical) occupy residues 218 to 238 (YKDM…VSFF), 280 to 300 (LGGA…PFTH), 312 to 332 (FMQL…WTAT), and 339 to 358 (FTTI…ISNP).

This sequence belongs to the cytochrome b family. As to quaternary structure, the cytochrome bc1 complex contains 3 respiratory subunits (MT-CYB, CYC1 and UQCRFS1), 2 core proteins (UQCRC1 and UQCRC2) and probably 6 low-molecular weight proteins. Heme b serves as cofactor.

It localises to the mitochondrion inner membrane. In terms of biological role, component of the ubiquinol-cytochrome c reductase complex (complex III or cytochrome b-c1 complex) that is part of the mitochondrial respiratory chain. The b-c1 complex mediates electron transfer from ubiquinol to cytochrome c. Contributes to the generation of a proton gradient across the mitochondrial membrane that is then used for ATP synthesis. The sequence is that of Cytochrome b (MT-CYB) from Chilabothrus strigilatus fosteri (Bimini Island boa constrictor).